An 89-amino-acid chain; its full sequence is Small ribosomal subunit protein uS15 (89 aa).

Belongs to the universal ribosomal protein uS15 family. In terms of assembly, part of the 30S ribosomal subunit. Forms a bridge to the 50S subunit in the 70S ribosome, contacting the 23S rRNA.

In terms of biological role, one of the primary rRNA binding proteins, it binds directly to 16S rRNA where it helps nucleate assembly of the platform of the 30S subunit by binding and bridging several RNA helices of the 16S rRNA. Its function is as follows. Forms an intersubunit bridge (bridge B4) with the 23S rRNA of the 50S subunit in the ribosome. This Beutenbergia cavernae (strain ATCC BAA-8 / DSM 12333 / CCUG 43141 / JCM 11478 / NBRC 16432 / NCIMB 13614 / HKI 0122) protein is Small ribosomal subunit protein uS15.